Consider the following 216-residue polypeptide: Ras-related protein Rab-2B (216 aa).

Residues Gly-16, Val-17, Gly-18, Lys-19, Ser-20, and Cys-21 each coordinate GDP. Positions 16, 17, 18, 19, 20, 21, and 38 each coordinate GTP. Ser-20 provides a ligand contact to Mg(2+). The short motif at 37–42 (LTIGVE) is the Switch 1 element. Residues Thr-38 and Asp-61 each coordinate Mg(2+). The Switch 2 motif lies at 63-72 (AGQESFRSIT). The GTP site is built by Gly-64, Asn-119, Lys-120, Asp-122, Ala-150, and Lys-151. Asn-119 serves as a coordination point for GDP. 3 residues coordinate GDP: Asp-122, Ala-150, and Lys-151. The tract at residues 189–216 (PQQSISTSVGPSASQRNSRDIGSNSGCC) is disordered. Ser-202 carries the phosphoserine modification. S-geranylgeranyl cysteine attachment occurs at residues Cys-215 and Cys-216.

The protein belongs to the small GTPase superfamily. Rab family. Interacts (in GTP-bound form) with GARIN4 (via N-terminus). Interacts (in GTP-bound form) with GARIN5A. Interacts (in GTP-bound form) with GARIN1B. Interacts with VPS39 and VPS41. It depends on Mg(2+) as a cofactor. In terms of tissue distribution, expressed in kidney, prostate, lung, liver, thymus, colon, pancreas, and skeletal muscle, and low levels in placenta. Not detected in heart, brain, spleen, testis, ovary, small intestine and leukocyte.

It is found in the cell membrane. Its subcellular location is the endoplasmic reticulum membrane. It localises to the golgi apparatus membrane. The protein resides in the cytoplasmic vesicle. The protein localises to the secretory vesicle. It is found in the acrosome. Its subcellular location is the autophagosome membrane. It catalyses the reaction GTP + H2O = GDP + phosphate + H(+). Regulated by guanine nucleotide exchange factors (GEFs) which promote the exchange of bound GDP for free GTP, GTPase activating proteins (GAPs) which increase the GTP hydrolysis activity, and GDP dissociation inhibitors (GDIs) which inhibit the dissociation of the nucleotide from the GTPase. The small GTPases Rab are key regulators of intracellular membrane trafficking, from the formation of transport vesicles to their fusion with membranes. Rabs cycle between active GTP-bound and inactive GDP-bound states. In their active state, drive transport of vesicular carriers from donor organelles to acceptor organelles to regulate the membrane traffic that maintains organelle identity and morphology. Regulates the compacted morphology of the Golgi. Promotes cytosolic DNA-induced innate immune responses. Regulates IFN responses against DNA viruses by regulating the CGAS-STING signaling axis. Together with RAB2A redundantly required for efficient autophagic flux. The protein is Ras-related protein Rab-2B of Homo sapiens (Human).